The sequence spans 836 residues: Spliceosome associated factor 3, U4/U6 recycling protein (836 aa).

HAT repeat units follow at residues 127–163 (EDFKFCRDVCSKALENLGTRYDSGGHIWLIFLEYEMS), 296–329 (KLPQVAVKVYSRALRHCPYSFVLHQQALLAFERD), 331–367 (RPNEEIDALWERARSNVINSAEEGRSLYRTYAFLLRR), 418–451 (KNMDKCRNIWNDILASGFGRFAGKWIEAVRLERQ), and 453–486 (GDKENARKYLNKALNSVSDNINEIYMYYVQFERE). The tract at residues 507 to 585 (RAIRPQKKVS…APGSFAVQKA (79 aa)) is disordered. A compositionally biased stretch (basic and acidic residues) spans 540–550 (IVKKVKGDDGG). The segment covering 558 to 579 (SNAKSSSAVSSSNASSTPAPGS) has biased composition (low complexity). RRM domains lie at 593–668 (RTIF…ANDP) and 683–760 (SKVF…LSNP). 2 disordered regions span residues 757-786 (LSNPPVKKDKSHGKPAAIGASLEEDGPRKG) and 811-830 (AMDVSEGTSTSQPLSNDQFR). Positions 816 to 827 (EGTSTSQPLSND) are enriched in polar residues.

In terms of assembly, forms a complex composed of sart-3, terminal uridylyltransferase usip-1 and U6 snRNA; complex formation is mediated by usip-1 and sart-3 binding to U6 snRNA. Associates with U4 and U6 snRNP complexes, probably by interacting with U4 and U6 snRNAs. Ubiquitously expressed.

It is found in the nucleus. The protein resides in the nucleoplasm. Its function is as follows. U6 snRNP-binding protein that functions as a recycling factor of the splicing machinery. Promotes the initial reassembly of U4 and U6 snRNPs following their ejection from the spliceosome during its maturation. In Caenorhabditis elegans, this protein is Spliceosome associated factor 3, U4/U6 recycling protein.